A 218-amino-acid polypeptide reads, in one-letter code: MINVLLVDDHELVRAGIRRILEDIKGIKVVGEASCGEDAVKWCRTNAVDVVLMDMSMPGIGGLEATRKIARSTADVKIIMLTVHTENPLPAKVMQAGAAGYLSKGAAPQEVVSAIRSVYSGQRYIASDIAQQMALSQIEPEKTESPFASLSERELQIMLMITKGQKVNEISEQLNLSPKTVNSYRYRMFSKLNIHGDVELTHLAIRHGLCNAETLSSQ.

The Response regulatory domain occupies 3–119 (NVLLVDDHEL…EVVSAIRSVY (117 aa)). Asp54 bears the 4-aspartylphosphate mark. An HTH luxR-type domain is found at 143–208 (TESPFASLSE…ELTHLAIRHG (66 aa)). A DNA-binding region (H-T-H motif) is located at residues 167-186 (VNEISEQLNLSPKTVNSYRY).

In terms of processing, phosphorylated and activated by BarA.

Its subcellular location is the cytoplasm. Its function is as follows. Member of the two-component regulatory system UvrY/BarA involved in the regulation of carbon metabolism via the CsrA/CsrB regulatory system. UvrY activates the transcription of the untranslated csrB RNA and of barA, in an autoregulatory loop. Mediates the effects of CsrA on csrB RNA by BarA-dependent and BarA-independent mechanisms. This chain is Response regulator UvrY (uvrY), found in Escherichia coli (strain K12).